The following is a 121-amino-acid chain: Protransforming growth factor alpha (121 aa).

A signal peptide is located at residue Leu1. A propeptide spans Glu2–Ala16 (removed in mature form). Over Glu2 to Gln75 the chain is Extracellular. Asn3 is a glycosylation site (N-linked (GlcNAc...) asparagine). In terms of domain architecture, EGF-like spans His20 to Glu60. 3 disulfides stabilise this stretch: Cys24/Cys37, Cys32/Cys48, and Cys50/Cys59. A propeptide spans Val67–Ser121 (removed in mature form). The helical transmembrane segment at Ala76–Cys101 threads the bilayer.

In terms of assembly, interacts with the PDZ domains of MAGI3, SDCBP and SNTA1. The interaction with SDCBP, is required for the targeting to the cell surface. In the endoplasmic reticulum, in its immature form (i.e. with a prosegment and lacking full N-glycosylation), interacts with CNIH. In the Golgi apparatus, may form a complex with CNIH and GORASP2. Interacts (via cytoplasmic C-terminal domain) with NKD2. As to expression, hypothalamus.

It localises to the secreted. The protein resides in the extracellular space. The protein localises to the cell membrane. Its function is as follows. TGF alpha is a mitogenic polypeptide that is able to bind to the EGF receptor/EGFR and to act synergistically with TGF beta to promote anchorage-independent cell proliferation in soft agar. The sequence is that of Protransforming growth factor alpha (TGFA) from Macaca mulatta (Rhesus macaque).